The sequence spans 123 residues: uncharacterized protein (123 aa).

A run of 2 helical transmembrane segments spans residues 55–77 and 92–114; these read LLIH…STIL and FFIN…TIVY.

It localises to the cell membrane. This is an uncharacterized protein from Pasteurella multocida (strain Pm70).